Reading from the N-terminus, the 553-residue chain is Coiled-coil domain-containing protein 22 homolog (553 aa).

The interval 236 to 264 (DSEEPAPPPISTVKPDASAEEEASPIQEL) is disordered. Coiled-coil stretches lie at residues 261–286 (IQEL…KAHA), 314–407 (ERTS…QSLA), and 498–549 (NVTK…VEQP).

Belongs to the CCDC22 family.

In Drosophila erecta (Fruit fly), this protein is Coiled-coil domain-containing protein 22 homolog.